A 108-amino-acid polypeptide reads, in one-letter code: Tubulin-specific chaperone A (108 aa).

Ala2 is modified (N-acetylalanine).

This sequence belongs to the TBCA family. Supercomplex made of cofactors A to E. Cofactors A and D function by capturing and stabilizing tubulin in a quasi-native conformation. Cofactor E binds to the cofactor D-tubulin complex; interaction with cofactor C then causes the release of tubulin polypeptides that are committed to the native state.

Its subcellular location is the cytoplasm. It is found in the cytoskeleton. Its function is as follows. Tubulin-folding protein; involved in the early step of the tubulin folding pathway. This Gallus gallus (Chicken) protein is Tubulin-specific chaperone A (TBCA).